Reading from the N-terminus, the 622-residue chain is Dopamine beta-hydroxylase (622 aa).

At 1–20 (MQAHLSHQPCWSSLPSPSVR) the chain is on the cytoplasmic side. Residues 21 to 41 (EAASMYGTAVAIFLVILVAAL) form a helical; Signal-anchor for type II membrane protein membrane-spanning segment. Residues 42–621 (RGSEPPESPF…TVPITTEADA (580 aa)) lie on the Intragranular side of the membrane. One can recognise a DOMON domain in the interval 61-177 (GILELSWNVS…DTVHLVYGIL (117 aa)). Residues N68 and N188 are each glycosylated (N-linked (GlcNAc...) asparagine). 6 disulfide bridges follow: C158–C600, C236–C287, C273–C299, C394–C507, C398–C569, and C470–C492. Y234 is an active-site residue. The Cu(2+) site is built by H266 and H267. H337 contributes to the Cu(2+) binding site. Phosphoserine; by CaMK is present on S350. H416 is an active-site residue. Residues H416 and H418 each contribute to the Cu(2+) site. The N-linked (GlcNAc...) asparagine glycan is linked to N476. Residue M491 coordinates Cu(2+). N570 carries an N-linked (GlcNAc...) asparagine glycan. A disordered region spans residues 594 to 622 (EEPTPRCPIRQTQSPANPTVPITTEADAE). Positions 603–615 (RQTQSPANPTVPI) are enriched in polar residues.

This sequence belongs to the copper type II ascorbate-dependent monooxygenase family. Homotetramer; composed of two disulfide-linked dimers. Requires Cu(2+) as cofactor. In terms of processing, proteolytic cleavage after the membrane-anchor leads to the release of the soluble form. N-glycosylated. As to expression, detected in adrenal gland secretory granules (at protein level). Detected in adrenal gland.

The protein resides in the cytoplasmic vesicle. It localises to the secretory vesicle lumen. The protein localises to the secretory vesicle. Its subcellular location is the chromaffin granule lumen. It is found in the secretory vesicle membrane. The protein resides in the chromaffin granule membrane. The catalysed reaction is dopamine + 2 L-ascorbate + O2 = (R)-noradrenaline + 2 monodehydro-L-ascorbate radical + H2O. It functions in the pathway catecholamine biosynthesis; (R)-noradrenaline biosynthesis; (R)-noradrenaline from dopamine: step 1/1. In terms of biological role, catalyzes the hydroxylation of dopamine to noradrenaline (also known as norepinephrine), and is thus vital for regulation of these neurotransmitters. The polypeptide is Dopamine beta-hydroxylase (Dbh) (Mus musculus (Mouse)).